The chain runs to 206 residues: Thymidylate kinase (206 aa).

Residue 11-18 participates in ATP binding; sequence GIDGAGKT.

It belongs to the thymidylate kinase family.

The enzyme catalyses dTMP + ATP = dTDP + ADP. Functionally, phosphorylation of dTMP to form dTDP in both de novo and salvage pathways of dTTP synthesis. This chain is Thymidylate kinase, found in Burkholderia lata (strain ATCC 17760 / DSM 23089 / LMG 22485 / NCIMB 9086 / R18194 / 383).